The sequence spans 347 residues: MRALGAVVALLLCGQLFAAETGNEATDATDDSCPKPPEIPKGYVEHMVRYHCQTYYKLRTAGDGVYTLDSNKQWTNKVTGEKLPECEAVCGKPKNPVDQVQRIMGGSLDAKGSFPWQAKMISHHNLTSGATLINEQWLLTTAKNLRLGHKNDTKAKDIAPTLRLYVGKKQEVEIEKVIFHPDNSTVDIGLIKLKQKVPVNERVMPICLPSKDYVNVGLVGYVSGWGRNANLNFTEHLKYVMLPVADQEKCVQYYEGSTVPEKKTPKSPVGVQPILNEHTFCAGLSKYQEDTCYGDAGSAFAVHDKDDDTWYAAGILSFDKSCRTAEYGVYVRVTSILDWIQTTIADN.

A signal peptide spans 1–18 (MRALGAVVALLLCGQLFA). In terms of domain architecture, Sushi spans 31 to 88 (DSCPKPPEIPKGYVEHMVRYHCQTYYKLRTAGDGVYTLDSNKQWTNKVTGEKLPECEA). 2 disulfide bridges follow: C52–C86 and C90–C207. Residues 103 to 345 (IMGGSLDAKG…ILDWIQTTIA (243 aa)) form the Peptidase S1 domain. N-linked (GlcNAc...) asparagine glycans are attached at residues N125, N151, N183, and N232. 2 disulfide bridges follow: C250-C281 and C292-C322. The interaction with CD163 stretch occupies residues 259–264 (VPEKKT).

The protein belongs to the peptidase S1 family. Tetramer of two alpha and two beta chains; disulfide-linked. The hemoglobin/haptoglobin complex is composed of a haptoglobin dimer bound to two hemoglobin alpha-beta dimers. Interacts with CD163. Interacts with ERGIC3. As to expression, expressed by the liver and secreted in plasma.

Its subcellular location is the secreted. Its function is as follows. As a result of hemolysis, hemoglobin is found to accumulate in the kidney and is secreted in the urine. Haptoglobin captures, and combines with free plasma hemoglobin to allow hepatic recycling of heme iron and to prevent kidney damage. Haptoglobin also acts as an antioxidant, has antibacterial activity and plays a role in modulating many aspects of the acute phase response. Hemoglobin/haptoglobin complexes are rapidly cleared by the macrophage CD163 scavenger receptor expressed on the surface of liver Kupfer cells through an endocytic lysosomal degradation pathway. In Sus scrofa (Pig), this protein is Haptoglobin (HP).